The sequence spans 115 residues: Large ribosomal subunit protein bL19 (115 aa).

The protein belongs to the bacterial ribosomal protein bL19 family.

Functionally, this protein is located at the 30S-50S ribosomal subunit interface and may play a role in the structure and function of the aminoacyl-tRNA binding site. This chain is Large ribosomal subunit protein bL19, found in Francisella tularensis subsp. tularensis (strain WY96-3418).